The following is a 450-amino-acid chain: Chitobiosyldiphosphodolichol beta-mannosyltransferase (450 aa).

Over 1–13 the chain is Lumenal; sequence MSWIQIPWSWVVT. The chain crosses the membrane as a helical span at residues 14-34; that stretch reads LIVTYLSLPLIIYYLVPYIFY. At 35-106 the chain is on the cytoplasmic side; it reads GNKSSKKRII…PTLTLQGNKR (72 aa). The segment at residues 107 to 127 is an intramembrane region (helical); that stretch reads SIIFLVKKVLFQVSAIIAQLW. Residues 128–450 are Cytoplasmic-facing; that stretch reads ELRGSNYMLI…SAMQELKLVA (323 aa).

This sequence belongs to the glycosyltransferase group 1 family.

It is found in the endoplasmic reticulum membrane. It carries out the reaction an N,N'-diacetylchitobiosyl-diphospho-di-trans,poly-cis-dolichol + GDP-alpha-D-mannose = a beta-D-Man-(1-&gt;4)-beta-D-GlcNAc-(1-&gt;4)-alpha-D-GlcNAc-diphospho-di-trans,poly-cis-dolichol + GDP + H(+). The protein operates within protein modification; protein glycosylation. Participates in the formation of the lipid-linked precursor oligosaccharide for N-glycosylation. Involved in assembling the dolichol-pyrophosphate-GlcNAc(2)-Man(5) intermediate on the cytoplasmic surface of the ER. In Candida glabrata (strain ATCC 2001 / BCRC 20586 / JCM 3761 / NBRC 0622 / NRRL Y-65 / CBS 138) (Yeast), this protein is Chitobiosyldiphosphodolichol beta-mannosyltransferase (ALG1).